The following is a 422-amino-acid chain: Protein phosphatase 1 regulatory subunit 36 (422 aa).

As to quaternary structure, interacts with PPP1CA.

Functionally, inhibits phosphatase activity of protein phosphatase 1 (PP1) complexes. This is Protein phosphatase 1 regulatory subunit 36 (PPP1R36) from Homo sapiens (Human).